The primary structure comprises 267 residues: Hydroxyethylthiazole kinase (267 aa).

Methionine 42 lines the substrate pocket. 2 residues coordinate ATP: arginine 118 and serine 164. Position 191 (alanine 191) interacts with substrate.

It belongs to the Thz kinase family. The cofactor is Mg(2+).

It carries out the reaction 5-(2-hydroxyethyl)-4-methylthiazole + ATP = 4-methyl-5-(2-phosphooxyethyl)-thiazole + ADP + H(+). The protein operates within cofactor biosynthesis; thiamine diphosphate biosynthesis; 4-methyl-5-(2-phosphoethyl)-thiazole from 5-(2-hydroxyethyl)-4-methylthiazole: step 1/1. Catalyzes the phosphorylation of the hydroxyl group of 4-methyl-5-beta-hydroxyethylthiazole (THZ). The protein is Hydroxyethylthiazole kinase of Pasteurella multocida (strain Pm70).